A 409-amino-acid chain; its full sequence is PPE family protein PPE32 (409 aa).

The protein belongs to the mycobacterial PPE family. In terms of assembly, interacts with host Toll-like receptor 2 (TLR2).

The protein resides in the secreted. Its subcellular location is the cell wall. It localises to the cell surface. In terms of biological role, virulence factor that modulates the production of host cytokines. The chain is PPE family protein PPE32 from Mycobacterium tuberculosis (strain CDC 1551 / Oshkosh).